Reading from the N-terminus, the 236-residue chain is Ion-translocating oxidoreductase complex subunit E (236 aa).

6 helical membrane passes run 18-38 (ALVQLLGLCPLLAVSSTATNA), 39-59 (LGLGLATTLVLVLTNSAVSAL), 69-89 (IPIYVMIIASVVSAVQMLINA), 92-112 (FGLYQSLGIFIPLIVTNCIVI), 128-148 (ALDGLATGLGATAALFVLGAL), and 182-202 (PFLLAILPPGAFLGLGFMLAF). Residues 217 to 236 (RSAVGQALRGAAPTDNHEQA) form a disordered region.

It belongs to the NqrDE/RnfAE family. The complex is composed of six subunits: RnfA, RnfB, RnfC, RnfD, RnfE and RnfG.

The protein resides in the cell inner membrane. Functionally, part of a membrane-bound complex that couples electron transfer with translocation of ions across the membrane. The sequence is that of Ion-translocating oxidoreductase complex subunit E from Edwardsiella ictaluri (strain 93-146).